Reading from the N-terminus, the 297-residue chain is tRNA uridine(34) hydroxylase (297 aa).

One can recognise a Rhodanese domain in the interval 133-228; it reads SGDEVVFFDG…YGETFKDQGL (96 aa). The active-site Cysteine persulfide intermediate is the C188.

This sequence belongs to the TrhO family.

The catalysed reaction is uridine(34) in tRNA + AH2 + O2 = 5-hydroxyuridine(34) in tRNA + A + H2O. Catalyzes oxygen-dependent 5-hydroxyuridine (ho5U) modification at position 34 in tRNAs. This chain is tRNA uridine(34) hydroxylase, found in Pseudarthrobacter chlorophenolicus (strain ATCC 700700 / DSM 12829 / CIP 107037 / JCM 12360 / KCTC 9906 / NCIMB 13794 / A6) (Arthrobacter chlorophenolicus).